A 338-amino-acid polypeptide reads, in one-letter code: mRNA decay activator protein ZFP36L1 (338 aa).

The interval 1-111 is necessary and sufficient for the association with mRNA decay enzymes and mRNA decay activation; sequence MTTTLVSATI…QKQPGSGQVN (111 aa). The residue at position 54 (serine 54) is a Phosphoserine; by MAPKAPK2. Serine 90 carries the post-translational modification Phosphoserine; by PKB/AKT1. Serine 92 is subject to Phosphoserine; by PKB/AKT1 and MAPKAPK2. A disordered region spans residues 93–113; that stretch reads EGGERLLPTQKQPGSGQVNSS. The span at 101 to 113 shows a compositional bias: polar residues; that stretch reads TQKQPGSGQVNSS. C3H1-type zinc fingers lie at residues 114–142 and 152–180; these read RYKTELCRPFEENGACKYGDKCQFAHGIH and KYKTELCRTFHTIGFCPYGPRCHFIHNAE. The tract at residues 185-338 is necessary for mRNA decay activation; it reads LAGGRDLSAD…IFSRLSISDD (154 aa). Serine 203 carries the phosphoserine; by PKB/AKT1 and MAPKAPK2 modification. The disordered stretch occupies residues 273-338; it reads SPTTFLFRPM…IFSRLSISDD (66 aa). Residues 305 to 318 show a composition bias toward low complexity; that stretch reads YLSSSSSSHSGSDS. At serine 318 the chain carries Phosphoserine. Serine 334 is subject to Phosphoserine; by RPS6KA1.

As to quaternary structure, associates with the cytoplasmic CCR4-NOT deadenylase and RNA exosome complexes to trigger ARE-containing mRNA deadenylation and decay processes. Interacts with CNOT1. Interacts (via N-terminus) with CNOT6. Interacts with CNOT7; this interaction is inhibited in response to phorbol 12-myristate 13-acetate (PMA) treatment in a p38 MAPK-dependent manner. Interacts with DCP1A. Interacts (via N-terminus) with DCP2. Interacts (via N-terminus) with EXOSC2. Interacts with XRN1. Interacts (via phosphorylated form) with YWHAB; this interaction occurs in a protein kinase AKT1-dependent manner. Interacts (via phosphorylated form) with YWHAZ; this interaction occurs in a p38 MAPK- and AKT-signaling pathways. Phosphorylated. Phosphorylated by RPS6KA1 at Ser-334 upon phorbol 12-myristate 13-acetate (PMA) treatment; this phosphorylation results in dissociation of the CCR4-NOT deadenylase complex and induces p38 MAPK-mediated stabilization of the low-density lipoprotein receptor LDLR mRNA. Phosphorylated by protein kinase AKT1 at Ser-92 and Ser-203 in response to insulin; these phosphorylations stabilize ZFP36L1, increase the association with 14-3-3 proteins and mediate ARE-containing mRNA stabilization. AKT1-mediated phosphorylation at Ser-92 does not impair ARE-containing RNA-binding. Phosphorylated at Ser-54, Ser-92 and Ser-203 by MAPKAPK2; these phosphorylations increase the association with 14-3-3 proteins and mediate ARE-containing mRNA stabilization in a protein kinase AKT1-independent manner. MAPKAPK2-mediated phosphorylations at Ser-54, Ser-92 and Ser-203 do not impair ARE-containing RNA-binding. Phosphorylations increase the association with 14-3-3 proteins and mediate ARE-containing mRNA stabilization during early adipogenesis in a p38 MAPK- and AKT-dependent manner. Phosphorylated by protein kinase AKT1 at Ser-92. In terms of processing, ubiquitinated. Ubiquitination leads to proteasomal degradation, a process inhibited by phosphorylations at Ser-90, Ser-92 and Ser-203.

Its subcellular location is the nucleus. It is found in the cytoplasm. The protein resides in the cytoplasmic granule. It localises to the P-body. Zinc-finger RNA-binding protein that destabilizes several cytoplasmic AU-rich element (ARE)-containing mRNA transcripts by promoting their poly(A) tail removal or deadenylation, and hence provide a mechanism for attenuating protein synthesis. Acts as a 3'-untranslated region (UTR) ARE mRNA-binding adapter protein to communicate signaling events to the mRNA decay machinery. Functions by recruiting the CCR4-NOT deadenylase complex and components of the cytoplasmic RNA decay machinery to the bound ARE-containing mRNAs, and hence promotes ARE-mediated mRNA deadenylation and decay processes. Also induces the degradation of ARE-containing mRNAs even in absence of poly(A) tail. Binds to 3'-UTR ARE of numerous mRNAs. Positively regulates early adipogenesis by promoting ARE-mediated mRNA decay of immediate early genes (IEGs). Promotes ARE-mediated mRNA decay of mineralocorticoid receptor NR3C2 mRNA in response to hypertonic stress. Negatively regulates hematopoietic/erythroid cell differentiation by promoting ARE-mediated mRNA decay of the transcription factor STAT5B mRNA. Positively regulates monocyte/macrophage cell differentiation by promoting ARE-mediated mRNA decay of the cyclin-dependent kinase CDK6 mRNA. Promotes degradation of ARE-containing pluripotency-associated mRNAs in embryonic stem cells (ESCs), such as NANOG, through a fibroblast growth factor (FGF)-induced MAPK-dependent signaling pathway, and hence attenuates ESC self-renewal and positively regulates mesendoderm differentiation. May play a role in mediating pro-apoptotic effects in malignant B-cells by promoting ARE-mediated mRNA decay of BCL2 mRNA. In association with ZFP36L2 maintains quiescence on developing B lymphocytes by promoting ARE-mediated decay of several mRNAs encoding cell cycle regulators that help B cells progress through the cell cycle, and hence ensuring accurate variable-diversity-joining (VDJ) recombination and functional immune cell formation. Together with ZFP36L2 is also necessary for thymocyte development and prevention of T-cell acute lymphoblastic leukemia (T-ALL) transformation by promoting ARE-mediated mRNA decay of the oncogenic transcription factor NOTCH1 mRNA. Participates in the delivery of target ARE-mRNAs to processing bodies (PBs). In addition to its cytosolic mRNA-decay function, plays a role in the regulation of nuclear mRNA 3'-end processing; modulates mRNA 3'-end maturation efficiency of the DLL4 mRNA through binding with an ARE embedded in a weak noncanonical polyadenylation (poly(A)) signal in endothelial cells. Also involved in the regulation of stress granule (SG) and P-body (PB) formation and fusion. Plays a role in vasculogenesis and endocardial development. Plays a role in the regulation of keratinocyte proliferation, differentiation and apoptosis. Plays a role in myoblast cell differentiation. This Rattus norvegicus (Rat) protein is mRNA decay activator protein ZFP36L1.